Consider the following 1162-residue polypeptide: DNA-directed RNA polymerase subunit beta (1162 aa).

Belongs to the RNA polymerase beta chain family. The RNAP catalytic core consists of 2 alpha, 1 beta, 1 beta' and 1 omega subunit. When a sigma factor is associated with the core the holoenzyme is formed, which can initiate transcription.

It carries out the reaction RNA(n) + a ribonucleoside 5'-triphosphate = RNA(n+1) + diphosphate. DNA-dependent RNA polymerase catalyzes the transcription of DNA into RNA using the four ribonucleoside triphosphates as substrates. This Clavibacter michiganensis subsp. michiganensis (strain NCPPB 382) protein is DNA-directed RNA polymerase subunit beta.